The sequence spans 388 residues: Gastricsin (388 aa).

The N-terminal stretch at 1 to 16 (MKWLLVALVCLHLLEA) is a signal peptide. A propeptide spans 17–59 (AVIKVPLRKFKSIRETLKEKGLLKEFLNTHKYDPALKYRFGDF) (activation peptide). The 313-residue stretch at 73–385 (YFGEISIGTP…DMANNRVGFA (313 aa)) folds into the Peptidase A1 domain. Residue aspartate 91 is part of the active site. Disulfide bonds link cysteine 104/cysteine 109 and cysteine 267/cysteine 271. Aspartate 276 is an active-site residue. A disulfide bridge links cysteine 310 with cysteine 343.

Belongs to the peptidase A1 family.

The protein resides in the secreted. It carries out the reaction More restricted specificity than pepsin A, but shows preferential cleavage at Tyr-|-Xaa bonds. High activity on hemoglobin.. In terms of biological role, hydrolyzes a variety of proteins. The chain is Gastricsin (PGC) from Oryctolagus cuniculus (Rabbit).